The primary structure comprises 146 residues: FAD synthase (146 aa).

ATP-binding positions include 9–10, 14–17, and Asp92; these read TF and HPGH.

The protein belongs to the archaeal FAD synthase family. In terms of assembly, homodimer. A divalent metal cation serves as cofactor.

It catalyses the reaction FMN + ATP + H(+) = FAD + diphosphate. The protein operates within cofactor biosynthesis; FAD biosynthesis; FAD from FMN: step 1/1. Catalyzes the transfer of the AMP portion of ATP to flavin mononucleotide (FMN) to produce flavin adenine dinucleotide (FAD) coenzyme. The protein is FAD synthase of Halobacterium salinarum (strain ATCC 29341 / DSM 671 / R1).